The chain runs to 154 residues: Lipoprotein signal peptidase (154 aa).

2 consecutive transmembrane segments (helical) span residues 55 to 75 and 84 to 104; these read GHMW…IYIM and LFSI…IDRV. Active-site residues include aspartate 111 and aspartate 129. The chain crosses the membrane as a helical span at residues 124–144; that stretch reads IFNVADASLSVGVVLMLVYVF.

Belongs to the peptidase A8 family.

The protein localises to the cell membrane. It carries out the reaction Release of signal peptides from bacterial membrane prolipoproteins. Hydrolyzes -Xaa-Yaa-Zaa-|-(S,diacylglyceryl)Cys-, in which Xaa is hydrophobic (preferably Leu), and Yaa (Ala or Ser) and Zaa (Gly or Ala) have small, neutral side chains.. Its pathway is protein modification; lipoprotein biosynthesis (signal peptide cleavage). Functionally, this protein specifically catalyzes the removal of signal peptides from prolipoproteins. This is Lipoprotein signal peptidase from Listeria welshimeri serovar 6b (strain ATCC 35897 / DSM 20650 / CCUG 15529 / CIP 8149 / NCTC 11857 / SLCC 5334 / V8).